The following is a 215-amino-acid chain: Orotate phosphoribosyltransferase (215 aa).

Lysine 26 lines the 5-phospho-alpha-D-ribose 1-diphosphate pocket. 34 to 35 (FF) serves as a coordination point for orotate. 5-phospho-alpha-D-ribose 1-diphosphate contacts are provided by residues 72–73 (YK), arginine 99, lysine 100, lysine 103, histidine 105, and 124–132 (DDVITAGTA). Orotate contacts are provided by threonine 128 and arginine 156.

This sequence belongs to the purine/pyrimidine phosphoribosyltransferase family. PyrE subfamily. Homodimer. Requires Mg(2+) as cofactor.

The catalysed reaction is orotidine 5'-phosphate + diphosphate = orotate + 5-phospho-alpha-D-ribose 1-diphosphate. It functions in the pathway pyrimidine metabolism; UMP biosynthesis via de novo pathway; UMP from orotate: step 1/2. Functionally, catalyzes the transfer of a ribosyl phosphate group from 5-phosphoribose 1-diphosphate to orotate, leading to the formation of orotidine monophosphate (OMP). The chain is Orotate phosphoribosyltransferase from Stutzerimonas stutzeri (strain A1501) (Pseudomonas stutzeri).